A 40-amino-acid chain; its full sequence is RapK inhibitor (40 aa).

Propeptides lie at residues 1–34 (MKKL…IQVA) and glycine 40.

Belongs to the Phr family. Contains a predicted signal peptide cleavage site in the N-terminal region, however the propeptide is probably only subject to processing events at the ends of the mature peptide.

Its subcellular location is the secreted. It localises to the cytoplasm. Signaling molecule involved in the regulation of genetic competence development. Secreted during production, but the mature peptide acts intracellularly, indicating that it needs to be imported into the cell to function. Stimulates expression of the genes controlled by ComA, a transcriptional factor that regulates the development of genetic competence. Acts by inhibiting RapK, which regulates the activity of ComA. This chain is RapK inhibitor (phrK), found in Bacillus subtilis (strain 168).